A 302-amino-acid polypeptide reads, in one-letter code: tRNA-cytidine(32) 2-sulfurtransferase (302 aa).

A PP-loop motif motif is present at residues 45 to 50 (SGGKDS). Residues Cys-120, Cys-123, and Cys-211 each contribute to the [4Fe-4S] cluster site.

It belongs to the TtcA family. Homodimer. Mg(2+) is required as a cofactor. It depends on [4Fe-4S] cluster as a cofactor.

The protein localises to the cytoplasm. It catalyses the reaction cytidine(32) in tRNA + S-sulfanyl-L-cysteinyl-[cysteine desulfurase] + AH2 + ATP = 2-thiocytidine(32) in tRNA + L-cysteinyl-[cysteine desulfurase] + A + AMP + diphosphate + H(+). It participates in tRNA modification. In terms of biological role, catalyzes the ATP-dependent 2-thiolation of cytidine in position 32 of tRNA, to form 2-thiocytidine (s(2)C32). The sulfur atoms are provided by the cysteine/cysteine desulfurase (IscS) system. In Cellvibrio japonicus (strain Ueda107) (Pseudomonas fluorescens subsp. cellulosa), this protein is tRNA-cytidine(32) 2-sulfurtransferase.